The following is a 174-amino-acid chain: MGTPGGGRRWMTLISITLLMVVGLGLYWDELSLSAGISPATSPRRAEGLLLGRLPLPMEPSILSPLEHLIEPPLQYKLMTIRHIPPVMPGTGMPHPYVGDCIQCHLMVGGPAAGSQFKTPYGAVLENLSRVRKLGPPILPTTRQPHPPAGRCIKCHDIVVKVPVEKKSGIKWLL.

The Cytoplasmic segment spans residues 1–9; that stretch reads MGTPGGGRR. The chain crosses the membrane as a helical span at residues 10 to 28; that stretch reads WMTLISITLLMVVGLGLYW. Over 29–174 the chain is Lumenal; that stretch reads DELSLSAGIS…EKKSGIKWLL (146 aa). Residues 87 to 107 carry the MCR (magnetochrome) 1 motif; the sequence is VMPGTGMPHPYVGDCIQCHLM. Heme is bound by residues Cys-101, Cys-104, His-105, Cys-152, Cys-155, and His-156. Residues 138–158 carry the MCR 2 motif; sequence ILPTTRQPHPPAGRCIKCHDI.

The protein belongs to the magnetosome MamT family. The cofactor is heme.

It localises to the magnetosome membrane. Its function is as follows. May play a role in magnetite crystal maturation. May transfer electrons to balance the Fe(2+)-Fe(3+) ratio during magnetite formation. This is Magnetosome protein MamT from Magnetospirillum gryphiswaldense (strain DSM 6361 / JCM 21280 / NBRC 15271 / MSR-1).